The primary structure comprises 155 residues: Ribosomal RNA large subunit methyltransferase H (155 aa).

S-adenosyl-L-methionine-binding positions include L73, G104, and 123 to 128; that span reads LSALTL.

The protein belongs to the RNA methyltransferase RlmH family. As to quaternary structure, homodimer.

The protein localises to the cytoplasm. It carries out the reaction pseudouridine(1915) in 23S rRNA + S-adenosyl-L-methionine = N(3)-methylpseudouridine(1915) in 23S rRNA + S-adenosyl-L-homocysteine + H(+). Specifically methylates the pseudouridine at position 1915 (m3Psi1915) in 23S rRNA. This is Ribosomal RNA large subunit methyltransferase H from Chromohalobacter salexigens (strain ATCC BAA-138 / DSM 3043 / CIP 106854 / NCIMB 13768 / 1H11).